Here is a 110-residue protein sequence, read N- to C-terminus: Disintegrin jerdostatin (110 aa).

Residues 1–20 form the signal peptide; the sequence is MIQVLLVTICLAVFPYQVSS. The propeptide occupies 21–67; it reads KTLKSGSVNEYEVVNPGTVTGLPKGAVKQPEKKHEPMKGNTLQKLPL. In terms of domain architecture, Disintegrin spans 27–110; the sequence is SVNEYEVVNP…CECPSYPGNG (84 aa). 4 disulfide bridges follow: Cys-68–Cys-77, Cys-73–Cys-96, Cys-74–Cys-101, and Cys-86–Cys-103. The short motif at 88–90 is the Cell attachment site; atypical (RTS) element; that stretch reads RTS.

Belongs to the disintegrin family. Short disintegrin subfamily. As to quaternary structure, monomer. Two conformers are found, they may differ by their disulfide bond connectivities. Conformer 2 is 33 times less active than conformer 1. Conformer 2 may represent a non-native protein. In terms of processing, the C-terminal dipeptide may be post-translationally removed, as seen in disintegrins that possess a KTS integrin-binding motif. As to expression, expressed by the venom gland.

It localises to the secreted. Functionally, recombinant protein inhibits the adhesion of alpha-1/beta-1-K562 (ITGA1/ITGB1) cells to collagen IV with an IC(50) of 80 nM. This is Disintegrin jerdostatin from Protobothrops jerdonii (Jerdon's pitviper).